A 120-amino-acid polypeptide reads, in one-letter code: MFLLHEYDIFWAFLIISSVIPILAFLISGVLAPISEGPEKLSSYESGIEPMGDAWLQFRIRYYMFALVFVVFDVETVFLYPWAMSFDVLGVSVFIEALIFVLIPIVGSVYAWRKGALEWS.

3 consecutive transmembrane segments (helical) span residues 9–29 (IFWA…LISG), 64–84 (MFAL…PWAM), and 88–108 (VLGV…IVGS).

This sequence belongs to the complex I subunit 3 family. In terms of assembly, NDH is composed of at least 16 different subunits, 5 of which are encoded in the nucleus.

It localises to the plastid. It is found in the chloroplast thylakoid membrane. It carries out the reaction a plastoquinone + NADH + (n+1) H(+)(in) = a plastoquinol + NAD(+) + n H(+)(out). The enzyme catalyses a plastoquinone + NADPH + (n+1) H(+)(in) = a plastoquinol + NADP(+) + n H(+)(out). Its function is as follows. NDH shuttles electrons from NAD(P)H:plastoquinone, via FMN and iron-sulfur (Fe-S) centers, to quinones in the photosynthetic chain and possibly in a chloroplast respiratory chain. The immediate electron acceptor for the enzyme in this species is believed to be plastoquinone. Couples the redox reaction to proton translocation, and thus conserves the redox energy in a proton gradient. The polypeptide is NAD(P)H-quinone oxidoreductase subunit 3, chloroplastic (Liriodendron tulipifera (Tuliptree)).